The following is a 171-amino-acid chain: uncharacterized protein (171 aa).

Residues 56–83 (TVGVNKNAKNGPTQSQTRSGSAGAQARM) are disordered. The span at 57–77 (VGVNKNAKNGPTQSQTRSGSA) shows a compositional bias: polar residues. The 58-residue stretch at 113-170 (KAFETLGLGASATTADIKAAYKDLVKKHHPDANGGDRGSEERFRAVIQAYQLLKQAGF) folds into the J domain.

This is an uncharacterized protein from Sinorhizobium sp.